The chain runs to 32 residues: Photosystem II reaction center protein T (32 aa).

A helical membrane pass occupies residues Thr-3 to Phe-23.

This sequence belongs to the PsbT family. As to quaternary structure, PSII is composed of 1 copy each of membrane proteins PsbA, PsbB, PsbC, PsbD, PsbE, PsbF, PsbH, PsbI, PsbJ, PsbK, PsbL, PsbM, PsbT, PsbX, PsbY, PsbZ, Psb30/Ycf12, at least 3 peripheral proteins of the oxygen-evolving complex and a large number of cofactors. It forms dimeric complexes.

The protein localises to the plastid. It is found in the chloroplast thylakoid membrane. In terms of biological role, found at the monomer-monomer interface of the photosystem II (PS II) dimer, plays a role in assembly and dimerization of PSII. PSII is a light-driven water plastoquinone oxidoreductase, using light energy to abstract electrons from H(2)O, generating a proton gradient subsequently used for ATP formation. The chain is Photosystem II reaction center protein T from Guillardia theta (Cryptophyte).